The primary structure comprises 363 residues: Spermatogenesis-associated protein 22 (363 aa).

Composition is skewed to polar residues over residues 1-12, 30-48, 98-108, and 140-157; these read MKRSLNENSARS, QPLTSNPLKDDSGISTPSD, IQSNTGRSQGG, and NDGKNSCPVSSGAQQQKQ. 3 disordered regions span residues 1 to 51, 98 to 127, and 140 to 170; these read MKRS…DNYD, IQSNTGRSQGGWSYRDGNKNTSLKTWNKND, and NDGKNSCPVSSGAQQQKQLRIPEPPNLSRNK.

As to quaternary structure, component of a multiprotein complex with MEIOB and RPA2. Interacts with MEIOB. Interacts with the complex BRME1:HSF2BP:BRCA2. In terms of tissue distribution, highly expressed in adult testis.

It localises to the chromosome. Its function is as follows. Meiosis-specific protein required for homologous recombination in meiosis I. This Homo sapiens (Human) protein is Spermatogenesis-associated protein 22.